A 236-amino-acid chain; its full sequence is Eukaryotic translation initiation factor 3 subunit J (236 aa).

Disordered stretches follow at residues 1 to 88 (MADD…LANM) and 188 to 236 (SEKQ…DDFM). Positions 28–46 (GEDDDEDVKESWEDEEEKK) are enriched in acidic residues. Basic and acidic residues-rich tracts occupy residues 47 to 58 (DEEKPTKTEAPV), 68 to 88 (AKLE…LANM), and 188 to 197 (SEKQKMEKAN). Coiled-coil stretches lie at residues 61–112 (KPNK…LKSA) and 174–209 (ADIK…KGKV). The segment covering 201–210 (SAAKAKGKVS) has biased composition (basic residues).

It belongs to the eIF-3 subunit J family. As to quaternary structure, component of the eukaryotic translation initiation factor 3 (eIF-3) complex. The eIF-3 complex interacts with pix.

The protein resides in the cytoplasm. Its function is as follows. Component of the eukaryotic translation initiation factor 3 (eIF-3) complex, which is involved in protein synthesis of a specialized repertoire of mRNAs and, together with other initiation factors, stimulates binding of mRNA and methionyl-tRNAi to the 40S ribosome. The eIF-3 complex specifically targets and initiates translation of a subset of mRNAs involved in cell proliferation. The chain is Eukaryotic translation initiation factor 3 subunit J from Drosophila virilis (Fruit fly).